A 416-amino-acid polypeptide reads, in one-letter code: Iron-regulated transcriptional activator AFT2 (416 aa).

Aspartate 53 lines the Zn(2+) pocket. Positions 54, 55, 58, 74, 75, 76, 77, 78, and 81 each coordinate DNA. Position 55 (histidine 55) interacts with Zn(2+). Residue cysteine 86 coordinates Zn(2+). Residue serine 88 participates in DNA binding. Cysteine 109 is a binding site for Zn(2+). The DNA site is built by valine 119 and arginine 120. The Zn(2+) site is built by histidine 133 and histidine 135. 2 residues coordinate DNA: glutamine 157 and asparagine 159. Positions 187 to 189 (CDC) match the CDC [2Fe-2S] cluster binding motif motif.

In terms of assembly, homodimer. Dimerization decreases the DNA-binding activity.

The protein localises to the nucleus. Dimerization via the binding of Fe(2+) or a [2Fe-2S] cluster decreases the DNA-binding activity. Its function is as follows. Transcription factor required for iron homeostasis and resistance to oxidative stress. With AFT1, activates the gene expression in response to low-iron conditions, also called iron regulon. Recognizes the consensus iron-responsive element (Fe-RE) sequence 5'-CACCC-3' in the promoters of target genes. The transcription activation by AFT1 and AFT2 depends on the mitochondrial iron-sulfur protein biosynthesis pathway. In high iron condition, the presence of iron leads to dimerization, which in turn leads to a decrease in DNA affinity. This chain is Iron-regulated transcriptional activator AFT2, found in Saccharomyces cerevisiae (strain ATCC 204508 / S288c) (Baker's yeast).